A 229-amino-acid chain; its full sequence is Orotidine 5'-phosphate decarboxylase (229 aa).

Substrate contacts are provided by residues aspartate 9, lysine 31, 58-67 (DLKLFDIPNT), threonine 121, arginine 179, glutamine 188, glycine 208, and arginine 209. The Proton donor role is filled by lysine 60.

The protein belongs to the OMP decarboxylase family. Type 1 subfamily. As to quaternary structure, homodimer.

It carries out the reaction orotidine 5'-phosphate + H(+) = UMP + CO2. The protein operates within pyrimidine metabolism; UMP biosynthesis via de novo pathway; UMP from orotate: step 2/2. Functionally, catalyzes the decarboxylation of orotidine 5'-monophosphate (OMP) to uridine 5'-monophosphate (UMP). The chain is Orotidine 5'-phosphate decarboxylase from Lawsonia intracellularis (strain PHE/MN1-00).